We begin with the raw amino-acid sequence, 324 residues long: o-succinylbenzoate synthase (324 aa).

Lys-135 functions as the Proton donor in the catalytic mechanism. Mg(2+) contacts are provided by Asp-163, Glu-192, and Asp-215. Residue Lys-237 is the Proton acceptor of the active site.

It belongs to the mandelate racemase/muconate lactonizing enzyme family. MenC type 1 subfamily. A divalent metal cation serves as cofactor.

It carries out the reaction (1R,6R)-6-hydroxy-2-succinyl-cyclohexa-2,4-diene-1-carboxylate = 2-succinylbenzoate + H2O. It functions in the pathway quinol/quinone metabolism; 1,4-dihydroxy-2-naphthoate biosynthesis; 1,4-dihydroxy-2-naphthoate from chorismate: step 4/7. It participates in quinol/quinone metabolism; menaquinone biosynthesis. Converts 2-succinyl-6-hydroxy-2,4-cyclohexadiene-1-carboxylate (SHCHC) to 2-succinylbenzoate (OSB). The chain is o-succinylbenzoate synthase from Aliivibrio fischeri (strain ATCC 700601 / ES114) (Vibrio fischeri).